The primary structure comprises 207 residues: Ribosome maturation factor RimP (207 aa).

A disordered region spans residues 171 to 207; sequence RAPGGAPEEGEEDTTEAAPEGAGKSPKPGRRPARKTH. Residues 197-207 show a composition bias toward basic residues; sequence KPGRRPARKTH.

The protein belongs to the RimP family.

Its subcellular location is the cytoplasm. Required for maturation of 30S ribosomal subunits. The sequence is that of Ribosome maturation factor RimP from Gluconacetobacter diazotrophicus (strain ATCC 49037 / DSM 5601 / CCUG 37298 / CIP 103539 / LMG 7603 / PAl5).